The following is a 264-amino-acid chain: S-adenosylmethionine decarboxylase proenzyme (264 aa).

The active-site Schiff-base intermediate with substrate; via pyruvic acid is the Ser-112. Ser-112 bears the Pyruvic acid (Ser); by autocatalysis mark. Residue His-117 is the Proton acceptor; for processing activity of the active site. Cys-140 functions as the Proton donor; for catalytic activity in the catalytic mechanism.

Belongs to the prokaryotic AdoMetDC family. Type 2 subfamily. In terms of assembly, heterooctamer of four alpha and four beta chains arranged as a tetramer of alpha/beta heterodimers. Pyruvate serves as cofactor. Post-translationally, is synthesized initially as an inactive proenzyme. Formation of the active enzyme involves a self-maturation process in which the active site pyruvoyl group is generated from an internal serine residue via an autocatalytic post-translational modification. Two non-identical subunits are generated from the proenzyme in this reaction, and the pyruvate is formed at the N-terminus of the alpha chain, which is derived from the carboxyl end of the proenzyme. The post-translation cleavage follows an unusual pathway, termed non-hydrolytic serinolysis, in which the side chain hydroxyl group of the serine supplies its oxygen atom to form the C-terminus of the beta chain, while the remainder of the serine residue undergoes an oxidative deamination to produce ammonia and the pyruvoyl group blocking the N-terminus of the alpha chain.

The enzyme catalyses S-adenosyl-L-methionine + H(+) = S-adenosyl 3-(methylsulfanyl)propylamine + CO2. The protein operates within amine and polyamine biosynthesis; S-adenosylmethioninamine biosynthesis; S-adenosylmethioninamine from S-adenosyl-L-methionine: step 1/1. In terms of biological role, catalyzes the decarboxylation of S-adenosylmethionine to S-adenosylmethioninamine (dcAdoMet), the propylamine donor required for the synthesis of the polyamines spermine and spermidine from the diamine putrescine. The chain is S-adenosylmethionine decarboxylase proenzyme from Yersinia pseudotuberculosis serotype O:1b (strain IP 31758).